We begin with the raw amino-acid sequence, 337 residues long: Heat-inducible transcription repressor HrcA (337 aa).

This sequence belongs to the HrcA family.

Negative regulator of class I heat shock genes (grpE-dnaK-dnaJ and groELS operons). Prevents heat-shock induction of these operons. The protein is Heat-inducible transcription repressor HrcA of Polaromonas naphthalenivorans (strain CJ2).